A 241-amino-acid chain; its full sequence is Tetraspanin-1 (241 aa).

At 1–11 (MQCFSFIKTMM) the chain is on the cytoplasmic side. The chain crosses the membrane as a helical span at residues 12-34 (ILFNLLIFLCGAALLAVGIWVSI). The Extracellular segment spans residues 35-53 (DGASFLKIFGPLSSSAMQF). The chain crosses the membrane as a helical span at residues 54–76 (VNVGYFLIAAGVVVFALGFLGCY). Residues 77–88 (GAKTESKCALMT) lie on the Cytoplasmic side of the membrane. Residues 89–111 (FFFILLLIFIAEVAAAVVALVYT) form a helical membrane-spanning segment. Topologically, residues 112 to 214 (TMAEHFLTLL…LYDIRTNAVT (103 aa)) are extracellular. N-linked (GlcNAc...) asparagine glycans are attached at residues Asn141, Asn154, Asn178, and Asn184. Residues 215–237 (VGGVAAGIGGLELAAMIVSMYLY) form a helical membrane-spanning segment. Topologically, residues 238–241 (CNLQ) are cytoplasmic.

It belongs to the tetraspanin (TM4SF) family. Interacts with SLC19A2. Interacts with NTRK1/TRKA.

The protein resides in the lysosome membrane. Functionally, structural component of specialized membrane microdomains known as tetraspanin-enriched microdomains (TERMs), which act as platforms for receptor clustering and signaling. Participates thereby in diverse biological functions such as cell signal transduction, adhesion, migration and protein trafficking. Regulates neuronal differentiation in response to NGF by facilitating NGF-mediated activation of NTRK1/TRKA receptor tyrosine kinase and subsequent downstream signaling pathways. Plays a role in the inhibition of TNFalpha-induced apoptosis. Mechanistically, inhibits the NF-kappa-B signaling pathway by blocking phosphorylation of CHUK. Also promotes the stability of the thiamine transporter 1/SLC19A2 in intestinal epithelial cells leading to an increase of thiamine uptake process. In Pongo abelii (Sumatran orangutan), this protein is Tetraspanin-1 (TSPAN1).